Reading from the N-terminus, the 255-residue chain is MNVLTIKGVSIGEGMPKIIIPLMGKTEKQILNEAEAVKLLNPDIVEWRVDVFEKANDREAVTKLISKLRKSLEDKLFLFTFRTHKEGGSMEMDESSYLALLESAIQTKDIDLIDIELFSGDANVKALVSLAEENNVYVVMSNHDFEKTPVKDEIISRLRKMQDLGAHIPKMAVMPNDTGDLLTLLDATYTMKTIYADRPIITMSMAATGLISRLSGEVFGSACTFGAGEEASAPGQIPVSELRSVLDILHKNTRG.

3-dehydroquinate contacts are provided by residues 46–48 (EWR) and arginine 82. Catalysis depends on histidine 143, which acts as the Proton donor/acceptor. Residue lysine 170 is the Schiff-base intermediate with substrate of the active site. Arginine 213, serine 232, and glutamine 236 together coordinate 3-dehydroquinate.

This sequence belongs to the type-I 3-dehydroquinase family. In terms of assembly, homodimer.

It carries out the reaction 3-dehydroquinate = 3-dehydroshikimate + H2O. Its pathway is metabolic intermediate biosynthesis; chorismate biosynthesis; chorismate from D-erythrose 4-phosphate and phosphoenolpyruvate: step 3/7. Functionally, involved in the third step of the chorismate pathway, which leads to the biosynthesis of aromatic amino acids. Catalyzes the cis-dehydration of 3-dehydroquinate (DHQ) and introduces the first double bond of the aromatic ring to yield 3-dehydroshikimate. The polypeptide is 3-dehydroquinate dehydratase (Bacillus subtilis (strain 168)).